The primary structure comprises 544 residues: Chaperonin GroEL 2 (544 aa).

Residues 29–32 (TLGP), Lys-50, 86–90 (DGTTT), Gly-414, and Asp-494 each bind ATP.

Belongs to the chaperonin (HSP60) family. Forms a cylinder of 14 subunits composed of two heptameric rings stacked back-to-back. Interacts with the co-chaperonin GroES.

It is found in the cytoplasm. The enzyme catalyses ATP + H2O + a folded polypeptide = ADP + phosphate + an unfolded polypeptide.. Functionally, together with its co-chaperonin GroES, plays an essential role in assisting protein folding. The GroEL-GroES system forms a nano-cage that allows encapsulation of the non-native substrate proteins and provides a physical environment optimized to promote and accelerate protein folding. In Psychromonas ingrahamii (strain DSM 17664 / CCUG 51855 / 37), this protein is Chaperonin GroEL 2.